The following is an 841-amino-acid chain: Axin-1 (841 aa).

The tract at residues 1–78 (MNIQGKGFPL…GYEPEGSASP (78 aa)) is disordered. Residues 44–61 (FYSSKSDAVRNETSTATP) are compositionally biased toward polar residues. The RGS domain occupies 88-211 (SLHSLLDDQD…LKSDIYLEYT (124 aa)). The segment at 217-269 (SPKIYSDPSSGSGTGKGLPGYLPTLNEDEEWKCDQDTEPEASRDSAPSSRLTQ) is disordered. A compositionally biased stretch (basic and acidic residues) spans 248 to 259 (KCDQDTEPEASR). The interaction with GSK3B stretch occupies residues 348–433 (LRKQHRREMQ…DADISSGPSV (86 aa)). The tract at residues 434-508 (ISHKMPSAQP…RSPESGHLGK (75 aa)) is interaction with beta-catenin. Disordered regions lie at residues 482–527 (KTPG…TTKS), 613–635 (NIKK…SPED), and 727–756 (RRLE…SGAS). Over residues 727-736 (RRLEEEEKRA) the composition is skewed to basic and acidic residues. One can recognise a DIX domain in the interval 759–841 (CENIVVAYYF…KIIGKVEKID (83 aa)).

In terms of assembly, homodimer. In terms of processing, ADP-ribosylated by tankyrase TNKS and TNKS2. Poly-ADP-ribosylated protein is recognized by RNF146, followed by ubiquitination at 'Lys-48' and subsequent activation of the Wnt signaling pathway. Ubiquitinated by RNF146 when poly-ADP-ribosylated, leading to its degradation and subsequent activation of the Wnt signaling pathway.

The protein localises to the cytoplasm. It localises to the nucleus. It is found in the membrane. Its subcellular location is the cell membrane. Functionally, component of the beta-catenin destruction complex required for regulating CTNNB1 levels through phosphorylation and ubiquitination, and modulating Wnt-signaling. Controls dorsoventral patterning via two opposing effects; down-regulates CTNNB1 to inhibit the Wnt signaling pathway and ventralize embryos, but also dorsalizes embryos by activating a Wnt-independent JNK signaling pathway. The chain is Axin-1 (AXIN1) from Gallus gallus (Chicken).